The primary structure comprises 34 residues: Photosystem II reaction center protein M (34 aa).

The chain crosses the membrane as a helical span at residues 5-25; it reads ILAFIATALFVLIPTAFLIIL.

Belongs to the PsbM family. As to quaternary structure, PSII is composed of 1 copy each of membrane proteins PsbA, PsbB, PsbC, PsbD, PsbE, PsbF, PsbH, PsbI, PsbJ, PsbK, PsbL, PsbM, PsbT, PsbX, PsbY, PsbZ, Psb30/Ycf12, at least 3 peripheral proteins of the oxygen-evolving complex and a large number of cofactors. It forms dimeric complexes.

It localises to the plastid. The protein resides in the chloroplast thylakoid membrane. Functionally, one of the components of the core complex of photosystem II (PSII). PSII is a light-driven water:plastoquinone oxidoreductase that uses light energy to abstract electrons from H(2)O, generating O(2) and a proton gradient subsequently used for ATP formation. It consists of a core antenna complex that captures photons, and an electron transfer chain that converts photonic excitation into a charge separation. This subunit is found at the monomer-monomer interface. The sequence is that of Photosystem II reaction center protein M from Zygnema circumcarinatum (Green alga).